The primary structure comprises 906 residues: Protein translocase subunit SecA (906 aa).

Residues glutamine 86, 104–108 (GEGKT), and aspartate 511 each bind ATP. Residues 852–888 (EHESVIDNNQRHDEDEQEEAPKVKQVRREGPKVKRND) show a composition bias toward basic and acidic residues. Positions 852–906 (EHESVIDNNQRHDEDEQEEAPKVKQVRREGPKVKRNDPCPCGSGKKYKQCHSKVE) are disordered. Positions 890, 892, 901, and 902 each coordinate Zn(2+). Positions 896 to 906 (KKYKQCHSKVE) are enriched in basic residues.

This sequence belongs to the SecA family. As to quaternary structure, monomer and homodimer. Part of the essential Sec protein translocation apparatus which comprises SecA, SecYEG and auxiliary proteins SecDF-YajC and YidC. Zn(2+) serves as cofactor.

The protein localises to the cell inner membrane. Its subcellular location is the cytoplasm. The enzyme catalyses ATP + H2O + cellular proteinSide 1 = ADP + phosphate + cellular proteinSide 2.. Part of the Sec protein translocase complex. Interacts with the SecYEG preprotein conducting channel. Has a central role in coupling the hydrolysis of ATP to the transfer of proteins into and across the cell membrane, serving both as a receptor for the preprotein-SecB complex and as an ATP-driven molecular motor driving the stepwise translocation of polypeptide chains across the membrane. This is Protein translocase subunit SecA from Francisella tularensis subsp. tularensis (strain SCHU S4 / Schu 4).